We begin with the raw amino-acid sequence, 520 residues long: Peptide chain release factor 3 (520 aa).

Positions 8–277 (ESRKTFAIIS…HAPMPNARQT (270 aa)) constitute a tr-type G domain. GTP-binding positions include 17–24 (SHPDAGKT), 85–89 (DTPGH), and 139–142 (NKLD).

The protein belongs to the TRAFAC class translation factor GTPase superfamily. Classic translation factor GTPase family. PrfC subfamily.

The protein resides in the cytoplasm. Its function is as follows. Increases the formation of ribosomal termination complexes and stimulates activities of RF-1 and RF-2. It binds guanine nucleotides and has strong preference for UGA stop codons. It may interact directly with the ribosome. The stimulation of RF-1 and RF-2 is significantly reduced by GTP and GDP, but not by GMP. The chain is Peptide chain release factor 3 from Staphylococcus saprophyticus subsp. saprophyticus (strain ATCC 15305 / DSM 20229 / NCIMB 8711 / NCTC 7292 / S-41).